Here is a 224-residue protein sequence, read N- to C-terminus: 7-cyano-7-deazaguanine synthase (224 aa).

An ATP-binding site is contributed by 12–22 (LSGGLDSSTVT). Zn(2+) contacts are provided by C193, C201, C204, and C207.

The protein belongs to the QueC family. It depends on Zn(2+) as a cofactor.

The catalysed reaction is 7-carboxy-7-deazaguanine + NH4(+) + ATP = 7-cyano-7-deazaguanine + ADP + phosphate + H2O + H(+). The protein operates within purine metabolism; 7-cyano-7-deazaguanine biosynthesis. Catalyzes the ATP-dependent conversion of 7-carboxy-7-deazaguanine (CDG) to 7-cyano-7-deazaguanine (preQ(0)). The chain is 7-cyano-7-deazaguanine synthase from Prochlorococcus marinus (strain MIT 9301).